Here is a 251-residue protein sequence, read N- to C-terminus: tRNA (guanine-N(7)-)-methyltransferase (251 aa).

S-adenosyl-L-methionine is bound by residues Gly-72, 95–96 (EI), 132–133 (NA), and Leu-152. Residue Asp-155 is part of the active site. 230–232 (SEE) lines the S-adenosyl-L-methionine pocket.

The protein belongs to the class I-like SAM-binding methyltransferase superfamily. TrmB family.

The protein resides in the nucleus. The catalysed reaction is guanosine(46) in tRNA + S-adenosyl-L-methionine = N(7)-methylguanosine(46) in tRNA + S-adenosyl-L-homocysteine. The protein operates within tRNA modification; N(7)-methylguanine-tRNA biosynthesis. In terms of biological role, catalyzes the formation of N(7)-methylguanine at position 46 (m7G46) in tRNA. This chain is tRNA (guanine-N(7)-)-methyltransferase, found in Drosophila willistoni (Fruit fly).